Reading from the N-terminus, the 718-residue chain is Nucleolar protein 11 (718 aa).

The residue at position 346 (lysine 346) is an N6-methyllysine.

As to quaternary structure, interacts with UTP4. Interacts with FBL/fibrillarin in a transcription-dependent manner. May associate with the proposed t-UTP subcomplex of the SSU processome containing at least UTP4, WDR43, HEATR1, UTP15, WDR75.

Its subcellular location is the nucleus. It localises to the nucleolus. Its function is as follows. Ribosome biogenesis factor. May be required for both optimal rDNA transcription and small subunit (SSU) pre-rRNA processing at sites A', A0, 1 and 2b. This Bos taurus (Bovine) protein is Nucleolar protein 11 (NOL11).